Reading from the N-terminus, the 393-residue chain is Phosphoglycerate kinase (393 aa).

Residues Asp21–Asn23, Arg36, His59–Arg62, Arg113, and Arg146 each bind substrate. ATP contacts are provided by residues Lys197, Glu319, and Gly345–Thr348.

The protein belongs to the phosphoglycerate kinase family. In terms of assembly, monomer.

Its subcellular location is the cytoplasm. The enzyme catalyses (2R)-3-phosphoglycerate + ATP = (2R)-3-phospho-glyceroyl phosphate + ADP. The protein operates within carbohydrate degradation; glycolysis; pyruvate from D-glyceraldehyde 3-phosphate: step 2/5. The sequence is that of Phosphoglycerate kinase from Nitratidesulfovibrio vulgaris (strain DP4) (Desulfovibrio vulgaris).